The chain runs to 62 residues: Photosystem II reaction center protein Z (62 aa).

The next 2 helical transmembrane spans lie at 8–28 (LVLLLIALSTVLVVGVPVVLA) and 41–61 (YTGAGLWTGLVIVTSLVNSLV).

Belongs to the PsbZ family. As to quaternary structure, PSII is composed of 1 copy each of membrane proteins PsbA, PsbB, PsbC, PsbD, PsbE, PsbF, PsbH, PsbI, PsbJ, PsbK, PsbL, PsbM, PsbT, PsbX, PsbY, PsbZ, Psb30/Ycf12, at least 3 peripheral proteins of the oxygen-evolving complex and a large number of cofactors. It forms dimeric complexes.

Its subcellular location is the plastid. It is found in the chloroplast thylakoid membrane. May control the interaction of photosystem II (PSII) cores with the light-harvesting antenna, regulates electron flow through the 2 photosystem reaction centers. PSII is a light-driven water plastoquinone oxidoreductase, using light energy to abstract electrons from H(2)O, generating a proton gradient subsequently used for ATP formation. The chain is Photosystem II reaction center protein Z from Pyropia yezoensis (Susabi-nori).